The primary structure comprises 247 residues: Protein At-4/1 (247 aa).

Coiled coils occupy residues 39-126 (VESS…YKIR) and 182-247 (LLME…LSSS).

Interacts with viral tomato spotted wilt virus (TSWV) movement protein NSM, which is involved in cell-to cell spread of viral genome and enlargement of the host plasmodesmata size exclusion limit (SEL). Expressed in leaves (at protein level).

Its subcellular location is the endoplasmic reticulum. The protein localises to the cell junction. It is found in the plasmodesma. Functionally, involved in intra- and inter-cellular trafficking through plasmodesmata (PD). This chain is Protein At-4/1, found in Arabidopsis thaliana (Mouse-ear cress).